The following is a 149-amino-acid chain: Arginine repressor (149 aa).

It belongs to the ArgR family.

It localises to the cytoplasm. It participates in amino-acid biosynthesis; L-arginine biosynthesis [regulation]. In terms of biological role, regulates arginine biosynthesis genes. This chain is Arginine repressor, found in Bacillus cereus (strain ATCC 10987 / NRS 248).